Here is a 275-residue protein sequence, read N- to C-terminus: Release factor glutamine methyltransferase (275 aa).

Residues 114-118, Asp137, Trp165, and Asn180 each bind S-adenosyl-L-methionine; that span reads GTGSG. 180-183 is a substrate binding site; sequence NPPY.

The protein belongs to the protein N5-glutamine methyltransferase family. PrmC subfamily.

The enzyme catalyses L-glutaminyl-[peptide chain release factor] + S-adenosyl-L-methionine = N(5)-methyl-L-glutaminyl-[peptide chain release factor] + S-adenosyl-L-homocysteine + H(+). Its function is as follows. Methylates the class 1 translation termination release factors RF1/PrfA and RF2/PrfB on the glutamine residue of the universally conserved GGQ motif. The sequence is that of Release factor glutamine methyltransferase from Xylella fastidiosa (strain Temecula1 / ATCC 700964).